Here is a 546-residue protein sequence, read N- to C-terminus: 2-isopropylmalate synthase (546 aa).

One can recognise a Pyruvate carboxyltransferase domain in the interval 8 to 271 (ILIFDTTLRD…NKFFNRNSDS (264 aa)). Mn(2+) contacts are provided by D17, H208, H210, and N244. The interval 408–546 (QLSLVQVSCG…DKTLLSNPGK (139 aa)) is regulatory domain.

Belongs to the alpha-IPM synthase/homocitrate synthase family. LeuA type 1 subfamily. As to quaternary structure, homodimer. Requires Mn(2+) as cofactor.

It localises to the cytoplasm. It catalyses the reaction 3-methyl-2-oxobutanoate + acetyl-CoA + H2O = (2S)-2-isopropylmalate + CoA + H(+). Its pathway is amino-acid biosynthesis; L-leucine biosynthesis; L-leucine from 3-methyl-2-oxobutanoate: step 1/4. In terms of biological role, catalyzes the condensation of the acetyl group of acetyl-CoA with 3-methyl-2-oxobutanoate (2-ketoisovalerate) to form 3-carboxy-3-hydroxy-4-methylpentanoate (2-isopropylmalate). In Prochlorococcus marinus (strain MIT 9215), this protein is 2-isopropylmalate synthase.